The chain runs to 78 residues: Sperm-specific protein Phi-0 (78 aa).

3 stretches are compositionally biased toward basic residues: residues 1 to 21, 31 to 57, and 64 to 78; these read MVAR…RSAA, AASR…KPKA, and VRRR…SVSK. A disordered region spans residues 1-78; that stretch reads MVARRQTKKA…RRIRRASVSK (78 aa).

It localises to the nucleus. Its subcellular location is the chromosome. Its function is as follows. Involved in nuclear basic protein transition: histones are replaced by spermatid specific proteins which are themselves replaced by protamines in late spermatids. The chain is Sperm-specific protein Phi-0 from Holothuria tubulosa (Tubular sea cucumber).